The following is a 146-amino-acid chain: 3-dehydroquinate dehydratase (146 aa).

Tyr23 acts as the Proton acceptor in catalysis. 3 residues coordinate substrate: Asn74, His80, and Asp87. The active-site Proton donor is the His100. Substrate-binding positions include 101–102 (IS) and Arg111.

The protein belongs to the type-II 3-dehydroquinase family. Homododecamer.

It carries out the reaction 3-dehydroquinate = 3-dehydroshikimate + H2O. It participates in metabolic intermediate biosynthesis; chorismate biosynthesis; chorismate from D-erythrose 4-phosphate and phosphoenolpyruvate: step 3/7. Its function is as follows. Catalyzes a trans-dehydration via an enolate intermediate. In Bacillus mycoides (strain KBAB4) (Bacillus weihenstephanensis), this protein is 3-dehydroquinate dehydratase.